The primary structure comprises 353 residues: Photosystem II protein D1 (353 aa).

N-acetylthreonine is present on Thr-2. Thr-2 carries the phosphothreonine modification. Helical transmembrane passes span 29–46 (YIGWFGVIMIPTLLTATS), 118–133 (HFFIGICCYMGREWEL), and 142–156 (WIAVAYSAPVAAATA). His-118 contributes to the chlorophyll a binding site. A pheophytin a-binding site is contributed by Tyr-126. [CaMn4O5] cluster contacts are provided by Asp-170 and Glu-189. A helical membrane pass occupies residues 197–218 (FHMLGVAGVFGGSLFSAMHGSL). His-198 provides a ligand contact to chlorophyll a. Residues His-215 and 264-265 (SF) contribute to the a quinone site. His-215 contributes to the Fe cation binding site. Residue His-272 participates in Fe cation binding. A helical membrane pass occupies residues 274–288 (FLAAWPVIGIWFTAL). [CaMn4O5] cluster-binding residues include His-332, Glu-333, Asp-342, and Ala-344. Positions 345–353 (AFEAPSINA) are excised as a propeptide.

Belongs to the reaction center PufL/M/PsbA/D family. As to quaternary structure, PSII is composed of 1 copy each of membrane proteins PsbA, PsbB, PsbC, PsbD, PsbE, PsbF, PsbH, PsbI, PsbJ, PsbK, PsbL, PsbM, PsbT, PsbX, PsbY, PsbZ, Psb30/Ycf12, at least 3 peripheral proteins of the oxygen-evolving complex and a large number of cofactors. It forms dimeric complexes. The D1/D2 heterodimer binds P680, chlorophylls that are the primary electron donor of PSII, and subsequent electron acceptors. It shares a non-heme iron and each subunit binds pheophytin, quinone, additional chlorophylls, carotenoids and lipids. D1 provides most of the ligands for the Mn4-Ca-O5 cluster of the oxygen-evolving complex (OEC). There is also a Cl(-1) ion associated with D1 and D2, which is required for oxygen evolution. The PSII complex binds additional chlorophylls, carotenoids and specific lipids. is required as a cofactor. In terms of processing, tyr-161 forms a radical intermediate that is referred to as redox-active TyrZ, YZ or Y-Z. Post-translationally, C-terminally processed by CTPA; processing is essential to allow assembly of the oxygen-evolving complex and thus photosynthetic growth.

The protein resides in the plastid. It is found in the chloroplast thylakoid membrane. The enzyme catalyses 2 a plastoquinone + 4 hnu + 2 H2O = 2 a plastoquinol + O2. Its function is as follows. Photosystem II (PSII) is a light-driven water:plastoquinone oxidoreductase that uses light energy to abstract electrons from H(2)O, generating O(2) and a proton gradient subsequently used for ATP formation. It consists of a core antenna complex that captures photons, and an electron transfer chain that converts photonic excitation into a charge separation. The D1/D2 (PsbA/PsbD) reaction center heterodimer binds P680, the primary electron donor of PSII as well as several subsequent electron acceptors. The polypeptide is Photosystem II protein D1 (Chlamydomonas moewusii (Chlamydomonas eugametos)).